Here is an 815-residue protein sequence, read N- to C-terminus: Tubulin polyglutamylase TTLL13 (815 aa).

The TTL domain occupies 85–430 (RRSLAINLTN…RGCDKRKVME (346 aa)). ATP contacts are provided by residues lysine 202, 208-209 (QG), 230-233 (QQYI), and 243-245 (KFD). Glutamine 208 contributes to the a protein binding site. L-glutamate is bound at residue arginine 269. 291 to 292 (TN) is an ATP binding site. L-glutamate is bound by residues tyrosine 293 and lysine 311. Residues aspartate 376, glutamate 389, and asparagine 391 each coordinate Mg(2+). The segment at 401 to 482 (CLDQEVKDAL…LGKYRRIYPG (82 aa)) is c-MTBD region. Residue lysine 407 participates in L-glutamate binding. A coiled-coil region spans residues 504–528 (ASKAREECARQQLEEIRLKQEQQET). Positions 520–556 (RLKQEQQETSGTKRQKARDQNQGESAGEKSRPRAGLQ) are disordered. Residues 536–550 (ARDQNQGESAGEKSR) show a composition bias toward basic and acidic residues.

The protein belongs to the tubulin--tyrosine ligase family. The cofactor is Mg(2+).

It catalyses the reaction (L-glutamyl)(n)-gamma-L-glutamyl-L-glutamyl-[protein] + L-glutamate + ATP = (L-glutamyl)(n+1)-gamma-L-glutamyl-L-glutamyl-[protein] + ADP + phosphate + H(+). Polyglutamylase which modifies tubulin, generating polyglutamate side chains of variable lengths on the gamma-carboxyl group of specific glutamate residues within the C-terminal tail of tubulin. Mediates ATP-dependent polyglutamate side-chain elongation of the polyglutamylation reaction but not the initiation step. Preferentially modifies the alpha-tubulin tail over a beta-tail. This Homo sapiens (Human) protein is Tubulin polyglutamylase TTLL13.